We begin with the raw amino-acid sequence, 465 residues long: Protein maelstrom (465 aa).

The HMG box DNA-binding region spans 2–69 (APKKHSAFMV…ADRAKRERLN (68 aa)). 2 disordered regions span residues 373-394 (NQSE…SYTP) and 419-443 (SKHR…PTHS). The span at 381-391 (SSSRPSVESSS) shows a compositional bias: low complexity. Positions 422–433 (RGLDVSAQRERN) are enriched in basic and acidic residues.

The protein belongs to the maelstrom family.

The protein localises to the cytoplasm. It localises to the nucleus. Its function is as follows. Involved both in the piRNA and miRNA metabolic processes. As a component of the meiotic nuage, plays a central role during oogenesis by repressing transposable elements and preventing their mobilization, which is essential for the germline integrity. Repression of transposable elements is mediated via the piRNA metabolic process, which mediates the repression of transposable elements during meiosis by forming complexes composed of piRNAs and Piwi proteins and governs the repression of transposons. As a nuclear component, it is required for proper differentiation in the germline stem cell (GSC) lineage by repressing microRNA-7 (miR-7), thereby acting as an indirect regulator of bag-of-marbles (Bam). Acts by binding to the promoter of miR-7 gene and repressing its expression; miR-7 repression alleviates the Bam repression by miR-7, thereby allowing differentiation in the germline stem cell (GSC) lineage. The protein is Protein maelstrom (mael) of Drosophila erecta (Fruit fly).